Consider the following 497-residue polypeptide: Pentatricopeptide repeat-containing protein At2g36240 (497 aa).

PPR repeat units follow at residues 156–186 (LEPI…MKRL), 192–226 (NVGV…RAKP), 227–261 (DVCT…GCEP), 262–296 (NVVS…GCRF), 297–331 (SEAT…RVLP), 332–366 (SEFD…GQTP), 367–401 (CFIA…GILP), 402–436 (DSVT…GYEP), and 437–471 (DETT…DMLP).

It belongs to the PPR family. P subfamily.

This is Pentatricopeptide repeat-containing protein At2g36240 from Arabidopsis thaliana (Mouse-ear cress).